The chain runs to 466 residues: 3-isopropylmalate dehydratase large subunit (466 aa).

[4Fe-4S] cluster contacts are provided by cysteine 347, cysteine 407, and cysteine 410.

It belongs to the aconitase/IPM isomerase family. LeuC type 1 subfamily. In terms of assembly, heterodimer of LeuC and LeuD. [4Fe-4S] cluster is required as a cofactor.

The enzyme catalyses (2R,3S)-3-isopropylmalate = (2S)-2-isopropylmalate. It functions in the pathway amino-acid biosynthesis; L-leucine biosynthesis; L-leucine from 3-methyl-2-oxobutanoate: step 2/4. In terms of biological role, catalyzes the isomerization between 2-isopropylmalate and 3-isopropylmalate, via the formation of 2-isopropylmaleate. This chain is 3-isopropylmalate dehydratase large subunit, found in Escherichia coli O17:K52:H18 (strain UMN026 / ExPEC).